Here is a 148-residue protein sequence, read N- to C-terminus: 3-dehydroquinate dehydratase (148 aa).

The active-site Proton acceptor is the Tyr24. Asn75, His81, and Asp88 together coordinate substrate. Residue His101 is the Proton donor of the active site. Residues 102-103 and Arg112 each bind substrate; that span reads LS.

It belongs to the type-II 3-dehydroquinase family. In terms of assembly, homododecamer.

The catalysed reaction is 3-dehydroquinate = 3-dehydroshikimate + H2O. It participates in metabolic intermediate biosynthesis; chorismate biosynthesis; chorismate from D-erythrose 4-phosphate and phosphoenolpyruvate: step 3/7. Catalyzes a trans-dehydration via an enolate intermediate. In Rhizobium meliloti (strain 1021) (Ensifer meliloti), this protein is 3-dehydroquinate dehydratase.